The chain runs to 119 residues: Phosphoribosyl-AMP cyclohydrolase (119 aa).

Residue Asp77 coordinates Mg(2+). Zn(2+) is bound at residue Cys78. Mg(2+)-binding residues include Asp79 and Asp81. Cys94 and Cys101 together coordinate Zn(2+).

The protein belongs to the PRA-CH family. In terms of assembly, homodimer. Mg(2+) is required as a cofactor. Requires Zn(2+) as cofactor.

Its subcellular location is the cytoplasm. It carries out the reaction 1-(5-phospho-beta-D-ribosyl)-5'-AMP + H2O = 1-(5-phospho-beta-D-ribosyl)-5-[(5-phospho-beta-D-ribosylamino)methylideneamino]imidazole-4-carboxamide. Its pathway is amino-acid biosynthesis; L-histidine biosynthesis; L-histidine from 5-phospho-alpha-D-ribose 1-diphosphate: step 3/9. Its function is as follows. Catalyzes the hydrolysis of the adenine ring of phosphoribosyl-AMP. The polypeptide is Phosphoribosyl-AMP cyclohydrolase (Dinoroseobacter shibae (strain DSM 16493 / NCIMB 14021 / DFL 12)).